A 944-amino-acid chain; its full sequence is Trehalose monomycolate exporter MmpL3 (944 aa).

Residues methionine 1–arginine 13 lie on the Cytoplasmic side of the membrane. A helical membrane pass occupies residues phenylalanine 14–leucine 34. The Periplasmic portion of the chain corresponds to glycine 35–glutamate 185. Glutamine 40–tyrosine 44 provides a ligand contact to a 1,2-diacylglycero-3-phosphoethanolamine. The chain crosses the membrane as a helical span at residues valine 186 to alanine 206. Over glycine 207–proline 209 the chain is Cytoplasmic. The chain crosses the membrane as a helical span at residues valine 210–phenylalanine 230. Residues glycine 231–tyrosine 235 are Periplasmic-facing. The chain crosses the membrane as a helical span at residues phenylalanine 236–isoleucine 256. Over valine 257–threonine 286 the chain is Cytoplasmic. Residues phenylalanine 287–leucine 307 form a helical membrane-spanning segment. At lysine 308–threonine 314 the chain is on the periplasmic side. A helical transmembrane segment spans residues isoleucine 315 to isoleucine 335. Residues leucine 336 to proline 396 are Cytoplasmic-facing. A helical membrane pass occupies residues valine 397–leucine 417. At serine 418–methionine 562 the chain is on the periplasmic side. A helical transmembrane segment spans residues valine 563–leucine 583. Residues proline 584–lysine 586 lie on the Cytoplasmic side of the membrane. A helical transmembrane segment spans residues alanine 587–valine 607. Topologically, residues aspartate 608–asparagine 616 are periplasmic. The helical transmembrane segment at phenylalanine 617–leucine 637 threads the bilayer. Topologically, residues serine 638–arginine 672 are cytoplasmic. Residues isoleucine 673 to leucine 693 form a helical membrane-spanning segment. Residues valine 694–tyrosine 698 lie on the Periplasmic side of the membrane. Residues leucine 699–valine 719 form a helical membrane-spanning segment. The Cytoplasmic segment spans residues proline 720–leucine 944. Positions alanine 778–leucine 944 are disordered. Low complexity predominate over residues proline 791–threonine 828. Over residues arginine 829–proline 839 the composition is skewed to polar residues. Pro residues predominate over residues serine 855–alanine 866.

The protein belongs to the resistance-nodulation-cell division (RND) (TC 2.A.6) family. MmpL subfamily. In terms of assembly, monomer. Interacts with TtfA (via N-terminus); active trehalose monomycolate (TMM) biosynthesis is not required for the complex formation.

Its subcellular location is the cell inner membrane. The protein localises to the cell septum. It localises to the cell tip. Its function is as follows. Transports trehalose monomycolate (TMM) to the cell wall. Flips TMM across the inner membrane. Membrane potential is not required for this function. Transports probably phosphatidylethanolamine (PE) as well. Binds specifically both TMM and PE, but not trehalose dimycolate (TDM). Also binds diacylglycerol (DAG) and other phospholipids, including phosphatidylglycerol (PG), phosphatidylinositol (PI), and cardiolipin (CDL). Contributes to membrane potential, cell wall composition, antibiotic susceptibility and fitness. Could also be part of a heme-iron acquisition system. The polypeptide is Trehalose monomycolate exporter MmpL3 (mmpL3) (Mycobacterium tuberculosis (strain CDC 1551 / Oshkosh)).